A 683-amino-acid polypeptide reads, in one-letter code: Glycine--tRNA ligase beta subunit (683 aa).

Belongs to the class-II aminoacyl-tRNA synthetase family. In terms of assembly, tetramer of two alpha and two beta subunits.

It is found in the cytoplasm. The catalysed reaction is tRNA(Gly) + glycine + ATP = glycyl-tRNA(Gly) + AMP + diphosphate. The chain is Glycine--tRNA ligase beta subunit from Pseudomonas putida (strain W619).